The primary structure comprises 557 residues: MTMLKDPSKKYRAFPTIELPDRTWPSKTITEAPIWCSSDLRDGNQSLIEPMDSEKKLRFWKTLVQVGVKEIEASFPSASQTDFDFVRTLIEDGHIPDDTTIQVLTQAREDLIARTFESLRGAKKAIVHLYNATSPSFRRIVFNQDKQGVKDIAVNAAKLFVKYAAQQPETQWTFQYSPETFSATELEFAKEVCDAVIEVWNPTPEHKVILNLPATVEVATPNIYADQIEWFCRNISRRDSVIISLHCHNDRGTGIAATELGLMAGADRAEGCLFGNGERTGNVDLVTLALNLYTQGIDPQLDFSDIDGVRKVVEECNQLPVHPRHPYVGDLVHTAFSGSHQDAIRKGFAKQQDGELWEVPYLPIDPADIGRSYEAVIRVNSQSGKGGITYLLEQEYGISLPRRMQIEFSQVVQGETDRLGLEMTAQQIYSLLHKEYLQANSPYALVSHRLQEENGHSAVEVEVAGEGETTLHWRGKGNGALEALVAGLPIAVEIMDYNEHAIGAGTNAKAAAYIELRVAGGRPVHGVGIDENITTASFKALFSALNRSLSQQEAKAA.

The Pyruvate carboxyltransferase domain occupies 33–307; sequence PIWCSSDLRD…DPQLDFSDID (275 aa). Positions 42, 246, 248, and 282 each coordinate Mg(2+). The tract at residues 439-557 is regulatory domain; sequence ANSPYALVSH…SLSQQEAKAA (119 aa).

This sequence belongs to the alpha-IPM synthase/homocitrate synthase family. LeuA type 2 subfamily. Homodimer. Requires Mg(2+) as cofactor.

Its subcellular location is the cytoplasm. It carries out the reaction 3-methyl-2-oxobutanoate + acetyl-CoA + H2O = (2S)-2-isopropylmalate + CoA + H(+). It participates in amino-acid biosynthesis; L-leucine biosynthesis; L-leucine from 3-methyl-2-oxobutanoate: step 1/4. Its function is as follows. Catalyzes the condensation of the acetyl group of acetyl-CoA with 3-methyl-2-oxobutanoate (2-ketoisovalerate) to form 3-carboxy-3-hydroxy-4-methylpentanoate (2-isopropylmalate). The chain is 2-isopropylmalate synthase from Pseudomonas putida (strain W619).